A 489-amino-acid chain; its full sequence is 3-octaprenyl-4-hydroxybenzoate carboxy-lyase (489 aa).

N172 contacts Mn(2+). Prenylated FMN-binding positions include 175 to 177 (IYR), 189 to 191 (RWL), and 194 to 195 (RG). Residue E238 participates in Mn(2+) binding. Residue D287 is the Proton donor of the active site.

Belongs to the UbiD family. Homohexamer. It depends on prenylated FMN as a cofactor. Mn(2+) is required as a cofactor.

It localises to the cell membrane. The enzyme catalyses a 4-hydroxy-3-(all-trans-polyprenyl)benzoate + H(+) = a 2-(all-trans-polyprenyl)phenol + CO2. Its pathway is cofactor biosynthesis; ubiquinone biosynthesis. Its function is as follows. Catalyzes the decarboxylation of 3-octaprenyl-4-hydroxy benzoate to 2-octaprenylphenol, an intermediate step in ubiquinone biosynthesis. In Klebsiella pneumoniae (strain 342), this protein is 3-octaprenyl-4-hydroxybenzoate carboxy-lyase.